Reading from the N-terminus, the 188-residue chain is GMP synthase [glutamine-hydrolyzing] subunit A (188 aa).

A Glutamine amidotransferase type-1 domain is found at 1–188 (MIVILNNGGQ…FCKVCGLLGE (188 aa)). Cysteine 76 serves as the catalytic Nucleophile. Catalysis depends on residues histidine 163 and glutamate 165.

As to quaternary structure, heterodimer composed of a glutamine amidotransferase subunit (A) and a GMP-binding subunit (B).

It carries out the reaction XMP + L-glutamine + ATP + H2O = GMP + L-glutamate + AMP + diphosphate + 2 H(+). It functions in the pathway purine metabolism; GMP biosynthesis; GMP from XMP (L-Gln route): step 1/1. In terms of biological role, catalyzes the synthesis of GMP from XMP. This chain is GMP synthase [glutamine-hydrolyzing] subunit A, found in Methanococcus aeolicus (strain ATCC BAA-1280 / DSM 17508 / OCM 812 / Nankai-3).